The following is a 764-amino-acid chain: Mitogen-activated protein kinase kinase kinase 1b (764 aa).

4 disordered regions span residues 1 to 81 (MVEE…IQQQ), 120 to 260 (KSIA…TATR), 325 to 348 (PNLA…SSAM), and 360 to 392 (VPEL…HYGS). Residues 14 to 30 (GSWGSGEDGGSSHGGKG) are compositionally biased toward gly residues. Composition is skewed to low complexity over residues 60–76 (VHST…LSKS) and 125–135 (SQPLSSPSLSQ). Residues 136–145 (EHGEASHSND) show a composition bias toward basic and acidic residues. Positions 184–201 (YVNSQPQNHYGRKNSPSQ) are enriched in polar residues. The Protein kinase domain maps to 431–684 (WFKGDFIGSG…CDMLLTHPFI (254 aa)). ATP contacts are provided by residues 437-445 (IGSGTFGSV) and lysine 459. Catalysis depends on aspartate 554, which acts as the Proton acceptor. A disordered region spans residues 706 to 764 (EERSIDVSESPSIATSSQSGSSPSVAGDAVSPASVAVRPRSMRTLRSEFSMSSPESIAS). Over residues 715–729 (SPSIATSSQSGSSPS) the composition is skewed to low complexity. Positions 752–764 (SEFSMSSPESIAS) are enriched in polar residues.

This sequence belongs to the protein kinase superfamily. STE Ser/Thr protein kinase family. MAP kinase kinase kinase subfamily.

It is found in the cell membrane. It catalyses the reaction L-seryl-[protein] + ATP = O-phospho-L-seryl-[protein] + ADP + H(+). The catalysed reaction is L-threonyl-[protein] + ATP = O-phospho-L-threonyl-[protein] + ADP + H(+). Functionally, the CERK1, MEKK1a/b, MKK1a/b/c and MPK4a/b proteins are involved in pathogen defense. The pathway induces rapid growth inhibition, cell wall depositions and accumulation of defense-related transcripts. This protein is required for responses to chitin and acts redundantly with MEKK1a. The polypeptide is Mitogen-activated protein kinase kinase kinase 1b (MEKK1b) (Physcomitrium patens (Spreading-leaved earth moss)).